The primary structure comprises 73 residues: Conotoxin MaI51 (73 aa).

The N-terminal stretch at 1-19 (MQKLTILLLVAAVLLSTQA) is a signal peptide. Residues 20–41 (LNQEKRPKEMINVLSKGKTNAE) constitute a propeptide that is removed on maturation. Q46 carries the pyrrolidone carboxylic acid modification. Disulfide bonds link C47–C61, C54–C65, and C60–C69. Position 72 is an isoleucine amide (I72).

The protein belongs to the conotoxin O2 superfamily. As to expression, expressed by the venom duct.

The protein resides in the secreted. The protein is Conotoxin MaI51 of Conus marmoreus (Marble cone).